A 195-amino-acid chain; its full sequence is MIRMTETENDDRNIILIGYRGTGKTSVGQELARRLHRPFHDTDVLIEKREGRSIRDMVAREGWAFFRERERAAISSLDGLRRCVLATGGGAVLDPKNAEVLKSLGWVVLLTASEEIIVRRILNDPASREQRPSFSGKASTEISEETMRKETTEILKQRMPIYRVLADQIIDTSQISTAEIVDEILRRFQSQRFNV.

21–26 (GTGKTS) contributes to the ATP binding site. Mg(2+) is bound at residue Thr-25. Asp-43, Arg-67, and Gly-89 together coordinate substrate. Residues 128–148 (REQRPSFSGKASTEISEETMR) are disordered. Arg-131 serves as a coordination point for ATP. Residues 132-141 (PSFSGKASTE) show a composition bias toward polar residues. A substrate-binding site is contributed by Arg-158.

It belongs to the shikimate kinase family. Monomer. It depends on Mg(2+) as a cofactor.

It is found in the cytoplasm. The catalysed reaction is shikimate + ATP = 3-phosphoshikimate + ADP + H(+). It participates in metabolic intermediate biosynthesis; chorismate biosynthesis; chorismate from D-erythrose 4-phosphate and phosphoenolpyruvate: step 5/7. Its function is as follows. Catalyzes the specific phosphorylation of the 3-hydroxyl group of shikimic acid using ATP as a cosubstrate. The protein is Shikimate kinase of Syntrophus aciditrophicus (strain SB).